A 548-amino-acid chain; its full sequence is Chaperonin GroEL (548 aa).

Residues 29 to 32 (THGP), Lys-50, 86 to 90 (DGTTT), Gly-414, and Asp-493 contribute to the ATP site.

The protein belongs to the chaperonin (HSP60) family. As to quaternary structure, forms a cylinder of 14 subunits composed of two heptameric rings stacked back-to-back. Interacts with the co-chaperonin GroES.

Its subcellular location is the cytoplasm. The catalysed reaction is ATP + H2O + a folded polypeptide = ADP + phosphate + an unfolded polypeptide.. Together with its co-chaperonin GroES, plays an essential role in assisting protein folding. The GroEL-GroES system forms a nano-cage that allows encapsulation of the non-native substrate proteins and provides a physical environment optimized to promote and accelerate protein folding. The protein is Chaperonin GroEL of Desulfatibacillum aliphaticivorans.